A 343-amino-acid polypeptide reads, in one-letter code: uncharacterized protein (343 aa).

Belongs to the histone deacetylase family.

Its function is as follows. Putative deacetylase. This is an uncharacterized protein from Methanocaldococcus jannaschii (strain ATCC 43067 / DSM 2661 / JAL-1 / JCM 10045 / NBRC 100440) (Methanococcus jannaschii).